A 170-amino-acid chain; its full sequence is Small ribosomal subunit protein uS15 (170 aa).

A compositionally biased stretch (basic residues) spans 1-10 (MARMHSRKKG). The tract at residues 1–20 (MARMHSRKKGSSGSRPPVVD) is disordered.

This sequence belongs to the universal ribosomal protein uS15 family. In terms of assembly, part of the 30S ribosomal subunit.

The protein is Small ribosomal subunit protein uS15 of Methanothrix thermoacetophila (strain DSM 6194 / JCM 14653 / NBRC 101360 / PT) (Methanosaeta thermophila).